The sequence spans 362 residues: Methylthioribose-1-phosphate isomerase (362 aa).

Aspartate 252 acts as the Proton donor in catalysis.

This sequence belongs to the eIF-2B alpha/beta/delta subunits family. MtnA subfamily.

It localises to the cytoplasm. Its subcellular location is the nucleus. It catalyses the reaction 5-(methylsulfanyl)-alpha-D-ribose 1-phosphate = 5-(methylsulfanyl)-D-ribulose 1-phosphate. It participates in amino-acid biosynthesis; L-methionine biosynthesis via salvage pathway; L-methionine from S-methyl-5-thio-alpha-D-ribose 1-phosphate: step 1/6. Catalyzes the interconversion of methylthioribose-1-phosphate (MTR-1-P) into methylthioribulose-1-phosphate (MTRu-1-P). The sequence is that of Methylthioribose-1-phosphate isomerase from Drosophila pseudoobscura pseudoobscura (Fruit fly).